We begin with the raw amino-acid sequence, 235 residues long: Large ribosomal subunit protein bL25 (235 aa).

2 disordered regions span residues 1–21 and 210–235; these read MADN…PARR and APAA…GAKK. The segment covering 210-222 has biased composition (low complexity); sequence APAAGAAPAAGGE. A compositionally biased stretch (basic and acidic residues) spans 223–235; sequence AAKKAPEAKGAKK.

This sequence belongs to the bacterial ribosomal protein bL25 family. CTC subfamily. Part of the 50S ribosomal subunit; part of the 5S rRNA/L5/L18/L25 subcomplex. Contacts the 5S rRNA. Binds to the 5S rRNA independently of L5 and L18.

In terms of biological role, this is one of the proteins that binds to the 5S RNA in the ribosome where it forms part of the central protuberance. The polypeptide is Large ribosomal subunit protein bL25 (Anaeromyxobacter sp. (strain Fw109-5)).